We begin with the raw amino-acid sequence, 118 residues long: Putative pterin-4-alpha-carbinolamine dehydratase (118 aa).

This sequence belongs to the pterin-4-alpha-carbinolamine dehydratase family.

The catalysed reaction is (4aS,6R)-4a-hydroxy-L-erythro-5,6,7,8-tetrahydrobiopterin = (6R)-L-erythro-6,7-dihydrobiopterin + H2O. This chain is Putative pterin-4-alpha-carbinolamine dehydratase, found in Pseudomonas aeruginosa (strain LESB58).